We begin with the raw amino-acid sequence, 546 residues long: MAKDIEYNETARRKLLEGVNKLANAVKVTLGPKGRNVVIDKKFGAPTITKDGVTVAKEIELEDPLENMGAQMVKEVSTKTNDVAGDGTTTATILAQSIINEGLKNVTAGANPMSLKRGIDKAVTAAVESIQKRAVKIENKKDIANVASISANNDNTIGNLIADAMDKVGKDGVITVEEAKSIETTLDVVEGMQFDRGYISPYMVTDAESMVATLNDPFILIYDKKISSMKDLIHILEKVAQAGKPLVIISEEVEGEALATIVVNTLRKTISCVAVKAPGFGDRRKSMLEDIAILTGGQVISEDLGMKLENTTLQMLGRANKVTVDKENTTIIEGKGQTKEIQGRIGQIKKQIEDTTSEYDREKLQERLAKLAGGVAVIHVGAATEVEMKEKKARVEDALSATRAAVEEGIVPGGGLTLLKAQEAVGSLKLDGDEATGAKIIFRALEEPIRMITSNAGLEGSVIVEHAKAKKGNEGFNALTMVWEDMIQAGVVDPAKVVRSALQNAASIGSMILTTEVTITDKPDKDAPNPMAGMGGGGMGGMGGMM.

ATP contacts are provided by residues threonine 29 to proline 32, lysine 50, aspartate 86 to threonine 90, glycine 414, asparagine 477 to leucine 479, and aspartate 493.

The protein belongs to the chaperonin (HSP60) family. As to quaternary structure, forms a cylinder of 14 subunits composed of two heptameric rings stacked back-to-back. Interacts with the co-chaperonin GroES.

The protein resides in the cytoplasm. The enzyme catalyses ATP + H2O + a folded polypeptide = ADP + phosphate + an unfolded polypeptide.. Functionally, together with its co-chaperonin GroES, plays an essential role in assisting protein folding. The GroEL-GroES system forms a nano-cage that allows encapsulation of the non-native substrate proteins and provides a physical environment optimized to promote and accelerate protein folding. This chain is Chaperonin GroEL, found in Leptospira interrogans serogroup Icterohaemorrhagiae serovar Lai (strain 56601).